A 488-amino-acid chain; its full sequence is Multidrug resistance outer membrane protein MdtP (488 aa).

Positions 1-23 are cleaved as a signal peptide; the sequence is MINRQLSRLLLCSILGSTTLISG. C24 carries the N-palmitoyl cysteine lipid modification. A lipid anchor (S-diacylglycerol cysteine) is attached at C24.

The protein belongs to the outer membrane factor (OMF) (TC 1.B.17) family. In terms of assembly, could be part of a tripartite efflux system composed of MdtN, MdtO and MdtP.

The protein resides in the cell outer membrane. Could be involved in resistance to puromycin, acriflavine and tetraphenylarsonium chloride. The chain is Multidrug resistance outer membrane protein MdtP (mdtP) from Escherichia coli O6:H1 (strain CFT073 / ATCC 700928 / UPEC).